The following is a 292-amino-acid chain: NAD kinase (292 aa).

Aspartate 73 (proton acceptor) is an active-site residue. Residues 73-74, 147-148, histidine 158, arginine 175, aspartate 177, 188-193, and glutamine 248 contribute to the NAD(+) site; these read DG, NE, and TGYSLS.

This sequence belongs to the NAD kinase family. The cofactor is a divalent metal cation.

It is found in the cytoplasm. The catalysed reaction is NAD(+) + ATP = ADP + NADP(+) + H(+). Its function is as follows. Involved in the regulation of the intracellular balance of NAD and NADP, and is a key enzyme in the biosynthesis of NADP. Catalyzes specifically the phosphorylation on 2'-hydroxyl of the adenosine moiety of NAD to yield NADP. This chain is NAD kinase, found in Buchnera aphidicola subsp. Baizongia pistaciae (strain Bp).